The following is a 242-amino-acid chain: Biosynthetic peptidoglycan transglycosylase (242 aa).

The helical transmembrane segment at Ile-19–Val-39 threads the bilayer.

It belongs to the glycosyltransferase 51 family.

The protein localises to the cell inner membrane. It catalyses the reaction [GlcNAc-(1-&gt;4)-Mur2Ac(oyl-L-Ala-gamma-D-Glu-L-Lys-D-Ala-D-Ala)](n)-di-trans,octa-cis-undecaprenyl diphosphate + beta-D-GlcNAc-(1-&gt;4)-Mur2Ac(oyl-L-Ala-gamma-D-Glu-L-Lys-D-Ala-D-Ala)-di-trans,octa-cis-undecaprenyl diphosphate = [GlcNAc-(1-&gt;4)-Mur2Ac(oyl-L-Ala-gamma-D-Glu-L-Lys-D-Ala-D-Ala)](n+1)-di-trans,octa-cis-undecaprenyl diphosphate + di-trans,octa-cis-undecaprenyl diphosphate + H(+). It participates in cell wall biogenesis; peptidoglycan biosynthesis. Its function is as follows. Peptidoglycan polymerase that catalyzes glycan chain elongation from lipid-linked precursors. The polypeptide is Biosynthetic peptidoglycan transglycosylase (Salmonella paratyphi A (strain ATCC 9150 / SARB42)).